The sequence spans 426 residues: Glutamate-1-semialdehyde 2,1-aminomutase (426 aa).

N6-(pyridoxal phosphate)lysine is present on Lys265.

This sequence belongs to the class-III pyridoxal-phosphate-dependent aminotransferase family. HemL subfamily. Homodimer. Requires pyridoxal 5'-phosphate as cofactor.

The protein resides in the cytoplasm. The enzyme catalyses (S)-4-amino-5-oxopentanoate = 5-aminolevulinate. Its pathway is porphyrin-containing compound metabolism; protoporphyrin-IX biosynthesis; 5-aminolevulinate from L-glutamyl-tRNA(Glu): step 2/2. The chain is Glutamate-1-semialdehyde 2,1-aminomutase from Salmonella agona (strain SL483).